A 423-amino-acid polypeptide reads, in one-letter code: D-tagatose-1,6-bisphosphate aldolase subunit GatZ (423 aa).

Belongs to the GatZ/KbaZ family. GatZ subfamily. In terms of assembly, forms a complex with GatY.

It participates in carbohydrate metabolism; D-tagatose 6-phosphate degradation; D-glyceraldehyde 3-phosphate and glycerone phosphate from D-tagatose 6-phosphate: step 2/2. Component of the tagatose-1,6-bisphosphate aldolase GatYZ that is required for full activity and stability of the Y subunit. Could have a chaperone-like function for the proper and stable folding of GatY. When expressed alone, GatZ does not show any aldolase activity. Is involved in the catabolism of galactitol. This chain is D-tagatose-1,6-bisphosphate aldolase subunit GatZ, found in Salmonella typhimurium (strain LT2 / SGSC1412 / ATCC 700720).